Reading from the N-terminus, the 78-residue chain is Short neurotoxin SNTX26 (78 aa).

The first 21 residues, methionine 1–threonine 21, serve as a signal peptide directing secretion. Intrachain disulfides connect cysteine 24–cysteine 40, cysteine 33–cysteine 58, cysteine 62–cysteine 70, and cysteine 71–cysteine 76.

Belongs to the three-finger toxin family. Short-chain subfamily. In terms of tissue distribution, expressed by the venom gland.

The protein resides in the secreted. This three-finger toxin binds and inhibits the nicotinic acetylcholine receptor (nAChR). The sequence is that of Short neurotoxin SNTX26 from Ophiophagus hannah (King cobra).